The chain runs to 284 residues: MTDKMQSLALAPVGNLDSYIRAANAWPMLSADEERALAEKLHYHGDLEAAKTLILSHLRFVVHIARNYAGYGLPQADLIQEGNIGLMKAVRRFNPEVGVRLVSFAVHWIKAEIHEYVLRNWRIVKVATTKAQRKLFFNLRKTKQRLGWFNQDEVEMVARELGVTSKDVREMESRMAAQDMTFDLSSDDDSDSQPMAPVLYLQDKSSNFADGIEDDNWEEQAANRLTDAMQGLDERSQDIIRARWLDEDNKSTLQELADRYGVSAERVRQLEKNAMKKLRAAIEA.

Residues 53–122 (LILSHLRFVV…IHEYVLRNWR (70 aa)) are sigma-70 factor domain-2. The short motif at 77–80 (DLIQ) is the Interaction with polymerase core subunit RpoC element. The sigma-70 factor domain-4 stretch occupies residues 228–280 (AMQGLDERSQDIIRARWLDEDNKSTLQELADRYGVSAERVRQLEKNAMKKLRA). Positions 253-272 (LQELADRYGVSAERVRQLEK) form a DNA-binding region, H-T-H motif.

This sequence belongs to the sigma-70 factor family. RpoH subfamily. As to quaternary structure, interacts with the RNA polymerase core enzyme.

It localises to the cytoplasm. Functionally, sigma factors are initiation factors that promote the attachment of RNA polymerase to specific initiation sites and are then released. This sigma factor is involved in regulation of expression of heat shock genes. This is RNA polymerase sigma factor RpoH from Escherichia coli O6:H1 (strain CFT073 / ATCC 700928 / UPEC).